The primary structure comprises 289 residues: 3-methyl-2-oxobutanoate hydroxymethyltransferase (289 aa).

Residues 1 to 15 are compositionally biased toward polar residues; sequence MSTTFKLDTSTSRAN. Residues 1–21 form a disordered region; that stretch reads MSTTFKLDTSTSRANPTPAPM. Mg(2+)-binding residues include Asp-67 and Asp-106. Residues 67–68, Asp-106, and Lys-136 each bind 3-methyl-2-oxobutanoate; that span reads DS. Glu-138 is a binding site for Mg(2+). Residue Glu-205 is the Proton acceptor of the active site.

It belongs to the PanB family. As to quaternary structure, homodecamer; pentamer of dimers. It depends on Mg(2+) as a cofactor.

It localises to the cytoplasm. The catalysed reaction is 3-methyl-2-oxobutanoate + (6R)-5,10-methylene-5,6,7,8-tetrahydrofolate + H2O = 2-dehydropantoate + (6S)-5,6,7,8-tetrahydrofolate. The protein operates within cofactor biosynthesis; (R)-pantothenate biosynthesis; (R)-pantoate from 3-methyl-2-oxobutanoate: step 1/2. Functionally, catalyzes the reversible reaction in which hydroxymethyl group from 5,10-methylenetetrahydrofolate is transferred onto alpha-ketoisovalerate to form ketopantoate. The polypeptide is 3-methyl-2-oxobutanoate hydroxymethyltransferase (Erythrobacter litoralis (strain HTCC2594)).